A 291-amino-acid polypeptide reads, in one-letter code: 4-diphosphocytidyl-2-C-methyl-D-erythritol kinase (291 aa).

The active site involves Lys-12. 95–105 lines the ATP pocket; the sequence is PDGGGLGGGSS. Asp-137 is an active-site residue.

It belongs to the GHMP kinase family. IspE subfamily.

It carries out the reaction 4-CDP-2-C-methyl-D-erythritol + ATP = 4-CDP-2-C-methyl-D-erythritol 2-phosphate + ADP + H(+). The protein operates within isoprenoid biosynthesis; isopentenyl diphosphate biosynthesis via DXP pathway; isopentenyl diphosphate from 1-deoxy-D-xylulose 5-phosphate: step 3/6. Catalyzes the phosphorylation of the position 2 hydroxy group of 4-diphosphocytidyl-2C-methyl-D-erythritol. This Alkalilimnicola ehrlichii (strain ATCC BAA-1101 / DSM 17681 / MLHE-1) protein is 4-diphosphocytidyl-2-C-methyl-D-erythritol kinase.